The following is a 272-amino-acid chain: Hydroxyethylthiazole kinase (272 aa).

M44 provides a ligand contact to substrate. ATP contacts are provided by K119 and T172. G199 provides a ligand contact to substrate.

This sequence belongs to the Thz kinase family. It depends on Mg(2+) as a cofactor.

It catalyses the reaction 5-(2-hydroxyethyl)-4-methylthiazole + ATP = 4-methyl-5-(2-phosphooxyethyl)-thiazole + ADP + H(+). It participates in cofactor biosynthesis; thiamine diphosphate biosynthesis; 4-methyl-5-(2-phosphoethyl)-thiazole from 5-(2-hydroxyethyl)-4-methylthiazole: step 1/1. Functionally, catalyzes the phosphorylation of the hydroxyl group of 4-methyl-5-beta-hydroxyethylthiazole (THZ). The protein is Hydroxyethylthiazole kinase of Enterococcus faecalis (strain ATCC 700802 / V583).